Consider the following 64-residue polypeptide: Large ribosomal subunit protein bL35 (64 aa).

Residues 27-47 (MNGSHNLEKKNRKRSRRLHQA) form a disordered region. Positions 36 to 45 (KNRKRSRRLH) are enriched in basic residues.

This sequence belongs to the bacterial ribosomal protein bL35 family.

The chain is Large ribosomal subunit protein bL35 from Chlorobium phaeobacteroides (strain DSM 266 / SMG 266 / 2430).